The chain runs to 513 residues: V-type proton ATPase subunit B (513 aa).

Arg-375 serves as a coordination point for ATP. A compositionally biased stretch (basic and acidic residues) spans 484 to 503; the sequence is ADRKGKGKDKPTTKDTRDTA. The segment at 484–513 is disordered; the sequence is ADRKGKGKDKPTTKDTRDTAAPEEENLIDA. Residues 504–513 show a composition bias toward acidic residues; the sequence is APEEENLIDA.

The protein belongs to the ATPase alpha/beta chains family. V-ATPase is a heteromultimeric enzyme composed of a peripheral catalytic V1 complex (components A to H) attached to an integral membrane V0 proton pore complex (components: a, c, c', c'', d, e, f and VOA1).

It is found in the vacuole membrane. Its function is as follows. Non-catalytic subunit of the V1 complex of vacuolar(H+)-ATPase (V-ATPase), a multisubunit enzyme composed of a peripheral complex (V1) that hydrolyzes ATP and a membrane integral complex (V0) that translocates protons. V-ATPase is responsible for acidifying and maintaining the pH of intracellular compartments. This chain is V-type proton ATPase subunit B, found in Neurospora crassa (strain ATCC 24698 / 74-OR23-1A / CBS 708.71 / DSM 1257 / FGSC 987).